The sequence spans 264 residues: Splicing factor U2af 38 kDa subunit (264 aa).

The C3H1-type 1 zinc-finger motif lies at 12-40 (EKDKVNCSFYFKIGACRHGDRCSRIHNKP). At Ser-19 the chain carries Phosphoserine. Positions 44-149 (QTVLLQNLYV…RPVYSELSPV (106 aa)) constitute an RRM domain. Residues 151–178 (DFREACCRQYEMGECTRSGFCNFMHLKP) form a C3H1-type 2 zinc finger. Residues 190–219 (RRRRARSRSRSPGRRRGSRSRSRSPGRRGG) are compositionally biased toward basic residues. The segment at 190-264 (RRRRARSRSR…GGGGGGGGRY (75 aa)) is disordered. Positions 233–251 (NERDNMRGNDRGNDRDRRK) are enriched in basic and acidic residues. Residues 253 to 264 (GGGGGGGGGGRY) show a composition bias toward gly residues.

Belongs to the splicing factor SR family. Associates with a 65 kDa protein.

Its subcellular location is the nucleus. Necessary for the splicing of pre-mRNA. Binds to the polypyrimidine tract of introns early during spliceosome assembly. In Drosophila melanogaster (Fruit fly), this protein is Splicing factor U2af 38 kDa subunit (U2af38).